The sequence spans 396 residues: S-adenosylmethionine synthase (396 aa).

H15 contributes to the ATP binding site. D17 is a binding site for Mg(2+). E43 serves as a coordination point for K(+). L-methionine is bound by residues E56 and Q99. The interval 99 to 109 is flexible loop; sequence QSPDIALGVNR. ATP-binding positions include 175 to 177, 241 to 242, D250, 256 to 257, A273, and K277; these read DGK, RF, and RK. D250 is an L-methionine binding site. K281 lines the L-methionine pocket.

Belongs to the AdoMet synthase family. In terms of assembly, homotetramer; dimer of dimers. Requires Mg(2+) as cofactor. It depends on K(+) as a cofactor.

Its subcellular location is the cytoplasm. The catalysed reaction is L-methionine + ATP + H2O = S-adenosyl-L-methionine + phosphate + diphosphate. It participates in amino-acid biosynthesis; S-adenosyl-L-methionine biosynthesis; S-adenosyl-L-methionine from L-methionine: step 1/1. Catalyzes the formation of S-adenosylmethionine (AdoMet) from methionine and ATP. The overall synthetic reaction is composed of two sequential steps, AdoMet formation and the subsequent tripolyphosphate hydrolysis which occurs prior to release of AdoMet from the enzyme. The sequence is that of S-adenosylmethionine synthase from Carboxydothermus hydrogenoformans (strain ATCC BAA-161 / DSM 6008 / Z-2901).